Consider the following 305-residue polypeptide: Sulfate adenylyltransferase subunit 2 (305 aa).

It belongs to the PAPS reductase family. CysD subfamily. As to quaternary structure, heterodimer composed of CysD, the smaller subunit, and CysN.

The enzyme catalyses sulfate + ATP + H(+) = adenosine 5'-phosphosulfate + diphosphate. Its pathway is sulfur metabolism; hydrogen sulfide biosynthesis; sulfite from sulfate: step 1/3. Its function is as follows. With CysN forms the ATP sulfurylase (ATPS) that catalyzes the adenylation of sulfate producing adenosine 5'-phosphosulfate (APS) and diphosphate, the first enzymatic step in sulfur assimilation pathway. APS synthesis involves the formation of a high-energy phosphoric-sulfuric acid anhydride bond driven by GTP hydrolysis by CysN coupled to ATP hydrolysis by CysD. The protein is Sulfate adenylyltransferase subunit 2 of Pseudomonas entomophila (strain L48).